We begin with the raw amino-acid sequence, 357 residues long: Probable cinnamyl alcohol dehydrogenase 1 (357 aa).

C47 lines the Zn(2+) pocket. Position 49 (T49) interacts with NADP(+). Positions 69, 70, 100, 103, 106, 114, and 163 each coordinate Zn(2+). Residues T167, 188-193, 211-216, T251, G275, and 298-300 each bind NADP(+); these read GLGGVG, SSSNKK, and SFI.

This sequence belongs to the zinc-containing alcohol dehydrogenase family. As to quaternary structure, homodimer. Zn(2+) is required as a cofactor. Post-translationally, the N-terminus is blocked.

It carries out the reaction (E)-cinnamyl alcohol + NADP(+) = (E)-cinnamaldehyde + NADPH + H(+). It catalyses the reaction (E)-coniferol + NADP(+) = (E)-coniferaldehyde + NADPH + H(+). The catalysed reaction is (E)-sinapyl alcohol + NADP(+) = (E)-sinapaldehyde + NADPH + H(+). The enzyme catalyses (E)-4-coumaroyl alcohol + NADP(+) = (E)-4-coumaraldehyde + NADPH + H(+). It carries out the reaction (E)-caffeyl alcohol + NADP(+) = (E)-caffeyl aldehyde + NADPH + H(+). Its pathway is aromatic compound metabolism; phenylpropanoid biosynthesis. Involved in lignin biosynthesis. Catalyzes the final step specific for the production of lignin monomers. Catalyzes the NADPH-dependent reduction of coniferaldehyde, 5-hydroxyconiferaldehyde, sinapaldehyde, 4-coumaraldehyde and caffeyl aldehyde to their respective alcohols. This Nicotiana tabacum (Common tobacco) protein is Probable cinnamyl alcohol dehydrogenase 1.